Consider the following 128-residue polypeptide: MRYRRGASAERELVKLLESKGFAVLRSAGSHKIDLVAGNGKEYLCIEVKSTRSRKLYLPIEDVEKLVEFAGRFGGRPVLAVKFVNVGWRFYGPNRLEHGEKSYKIDLETPFMTLDGLLGKQRTLEGVL.

Glu10 provides a ligand contact to Mg(2+). Ser30 is an active-site residue. Mg(2+)-binding residues include Asp34 and Glu47.

The protein belongs to the Holliday junction resolvase Hjc family. As to quaternary structure, homodimer. Requires Mg(2+) as cofactor.

The catalysed reaction is Endonucleolytic cleavage at a junction such as a reciprocal single-stranded crossover between two homologous DNA duplexes (Holliday junction).. In terms of biological role, a structure-specific endonuclease that resolves Holliday junction (HJ) intermediates during genetic recombination. Cleaves 4-way DNA junctions introducing paired nicks in opposing strands, leaving a 5'-terminal phosphate and a 3'-terminal hydroxyl group that are subsequently ligated to produce recombinant products. This chain is Crossover junction endodeoxyribonuclease Hjc, found in Thermococcus kodakarensis (strain ATCC BAA-918 / JCM 12380 / KOD1) (Pyrococcus kodakaraensis (strain KOD1)).